An 805-amino-acid polypeptide reads, in one-letter code: MGKKQLVLVGNGMAGVRAIEEILSVAKDEFQITIFGAEPHPNYNRILLSKVLQGDTDIKDITLNDWDWYEENNIQLYTNETVIKVDTENKTVITDADRIQPYDELILATGSVPFILPIPGADKKGVTAFRDIKDTDTMLAASKQYKKAAVIGGGLLGLEAARGLLNLGMDVSVIHLAPFLMERQLDATAGRLLQNELEKQGMTFLLEKQTEEIVGDDRVEGLRFKDGTSIEADLVVMAVGIRPNTTLGAESGIPVNRGIIVNDYMQTEIPHIYAVGECAEHRGIAYGLVAPLYEQAKVLAKHMCGIETKPYEGSVLSTQLKVSGVEVFSAGDFNESEEKKAIKVFDEQDGIYKKIVLRGNQIVGAVLFGDSSEGNRLFSMIQKEADISETSKISILQPLSQEAGTSITAAMSDDEIICGCNGVSKGAIIQAIQEKGCSSTDEIKACTGASRSCGGCKPLVEEILQHTLGSDFDASAQKEAICGCTTLSRDEVVEEIKAKGLSHTREVMNVLGWKTPEGCSKCRPALNYYLGMINPTKYEDDRTSRFVNERMHANIQKDGTYSVVPRMYGGVTNSTDLRKIADVVDKYEIPLVKMTGGQRIDLIGVKKEDLPKVWEDLDMPSGYAYGKTLRTVKTCVGEQFCRFGTQDSMALGIALEKKFEGLNTPHKVKMAVSACPRNCAESGIKDLGVVGIDGGWELYVGGNGGTHLRAGDLLMKVKTNEEVLEYAGAYLQYYRETANYLERTSAWLERVGLSHVQSVLNDPEKRQELNGRMNETLSVHKDPWKDFLEDKQTSKELFENVVTTS.

Residue 43-79 (YNRILLSKVLQGDTDIKDITLNDWDWYEENNIQLYTN) coordinates FAD. 193–223 (LQNELEKQGMTFLLEKQTEEIVGDDRVEGLR) provides a ligand contact to NADP(+). Residues Cys418, Cys420, Cys453, and Cys456 each contribute to the [2Fe-2S] cluster site. [4Fe-4S] cluster is bound by residues Cys635, Cys641, Cys675, and Cys679. Cys679 is a siroheme binding site.

This sequence belongs to the nitrite and sulfite reductase 4Fe-4S domain family. As to quaternary structure, homodimer. Siroheme serves as cofactor. Requires [2Fe-2S] cluster as cofactor. The cofactor is [4Fe-4S] cluster. FAD is required as a cofactor.

The catalysed reaction is NH4(+) + 3 NADP(+) + 2 H2O = nitrite + 3 NADPH + 5 H(+). The enzyme catalyses NH4(+) + 3 NAD(+) + 2 H2O = nitrite + 3 NADH + 5 H(+). It functions in the pathway nitrogen metabolism; nitrate reduction (assimilation). Its function is as follows. Required for nitrite assimilation. In Bacillus subtilis (strain 168), this protein is Nitrite reductase [NAD(P)H] (nasD).